Consider the following 333-residue polypeptide: Taste receptor type 2 member 123 (333 aa).

At 1 to 13 the chain is on the extracellular side; that stretch reads MFSQKINYSHLFT. Asn-7 is a glycosylation site (N-linked (GlcNAc...) asparagine). The helical transmembrane segment at 14–34 threads the bilayer; it reads FSITLYVEIVTGILGHGFIAL. The Cytoplasmic portion of the chain corresponds to 35 to 60; the sequence is VNIMDWVKRRRISSVDQILTALALTR. Residues 61–81 traverse the membrane as a helical segment; that stretch reads FIYVLSMLICILLFMLCPHLP. At 82-90 the chain is on the extracellular side; sequence RRSEMLSAM. The chain crosses the membrane as a helical span at residues 91 to 111; sequence GIFWVVNSHFSIWLTTCLGVF. The Cytoplasmic portion of the chain corresponds to 112 to 134; that stretch reads YFLKIANFSNSFFLYLKWRVKKV. Residues 135–155 traverse the membrane as a helical segment; the sequence is ILIIILASLIFLTLHILSLGI. The Extracellular segment spans residues 156-205; the sequence is YDQFSIAAYVGNMSYSLTDLTQFSSTFLFSNSSNVFLITNSSHVFLPINS. Residues Asn-167, Asn-186, and Asn-195 are each glycosylated (N-linked (GlcNAc...) asparagine). Residues 206–226 traverse the membrane as a helical segment; the sequence is LFMLIPFTVSLVAFLMLIFSL. The Cytoplasmic portion of the chain corresponds to 227–253; it reads WKHHKKMQVNAKQPRDVSTMAHIKALQ. The helical transmembrane segment at 254 to 274 threads the bilayer; the sequence is TVFSFLLLYAIYLLFLIIGIL. Over 275–281 the chain is Extracellular; that stretch reads NLGLMEK. Residues 282–302 form a helical membrane-spanning segment; it reads IVILIFDHISGAVFPISHSFV. Residues 303-333 are Cytoplasmic-facing; sequence LILGNSKLRQASLSVLPCLRCQSKDMDTMGL.

Belongs to the G-protein coupled receptor T2R family. As to expression, expressed in subsets of taste receptor cells of the tongue and palate epithelium and exclusively in gustducin-positive cells. Expressed in the duodenum, antrum and fundus (part of the stomach).

It localises to the membrane. In terms of biological role, gustducin-coupled receptor implicated in the perception of bitter compounds in the oral cavity and the gastrointestinal tract. Signals through PLCB2 and the calcium-regulated cation channel TRPM5. The protein is Taste receptor type 2 member 123 (Tas2r123) of Mus musculus (Mouse).